Consider the following 151-residue polypeptide: D-aminoacyl-tRNA deacylase (151 aa).

The Gly-cisPro motif, important for rejection of L-amino acids motif lies at 137-138 (GP).

Belongs to the DTD family. Homodimer.

Its subcellular location is the cytoplasm. It carries out the reaction glycyl-tRNA(Ala) + H2O = tRNA(Ala) + glycine + H(+). It catalyses the reaction a D-aminoacyl-tRNA + H2O = a tRNA + a D-alpha-amino acid + H(+). Its function is as follows. An aminoacyl-tRNA editing enzyme that deacylates mischarged D-aminoacyl-tRNAs. Also deacylates mischarged glycyl-tRNA(Ala), protecting cells against glycine mischarging by AlaRS. Acts via tRNA-based rather than protein-based catalysis; rejects L-amino acids rather than detecting D-amino acids in the active site. By recycling D-aminoacyl-tRNA to D-amino acids and free tRNA molecules, this enzyme counteracts the toxicity associated with the formation of D-aminoacyl-tRNA entities in vivo and helps enforce protein L-homochirality. In Acaryochloris marina (strain MBIC 11017), this protein is D-aminoacyl-tRNA deacylase.